Consider the following 258-residue polypeptide: Imidazole glycerol phosphate synthase subunit HisF (258 aa).

Residues Asp11 and Asp130 contribute to the active site.

This sequence belongs to the HisA/HisF family. As to quaternary structure, heterodimer of HisH and HisF.

It is found in the cytoplasm. It carries out the reaction 5-[(5-phospho-1-deoxy-D-ribulos-1-ylimino)methylamino]-1-(5-phospho-beta-D-ribosyl)imidazole-4-carboxamide + L-glutamine = D-erythro-1-(imidazol-4-yl)glycerol 3-phosphate + 5-amino-1-(5-phospho-beta-D-ribosyl)imidazole-4-carboxamide + L-glutamate + H(+). Its pathway is amino-acid biosynthesis; L-histidine biosynthesis; L-histidine from 5-phospho-alpha-D-ribose 1-diphosphate: step 5/9. In terms of biological role, IGPS catalyzes the conversion of PRFAR and glutamine to IGP, AICAR and glutamate. The HisF subunit catalyzes the cyclization activity that produces IGP and AICAR from PRFAR using the ammonia provided by the HisH subunit. The chain is Imidazole glycerol phosphate synthase subunit HisF from Xanthomonas campestris pv. campestris (strain B100).